The sequence spans 335 residues: Protein-glutamate methylesterase/protein-glutamine glutaminase 3 (335 aa).

Residues 2–119 (RIGIVNDMPL…GNPQTAAAPL (118 aa)) enclose the Response regulatory domain. Residue Asp53 is modified to 4-aspartylphosphate. Residues 144 to 335 (PKAGGARQRL…IAPRLAEVFD (192 aa)) enclose the CheB-type methylesterase domain. Residues Ser159, His186, and Asp279 contribute to the active site.

This sequence belongs to the CheB family. Post-translationally, phosphorylated by CheA. Phosphorylation of the N-terminal regulatory domain activates the methylesterase activity.

It localises to the cytoplasm. The enzyme catalyses [protein]-L-glutamate 5-O-methyl ester + H2O = L-glutamyl-[protein] + methanol + H(+). It catalyses the reaction L-glutaminyl-[protein] + H2O = L-glutamyl-[protein] + NH4(+). Functionally, involved in chemotaxis. Part of a chemotaxis signal transduction system that modulates chemotaxis in response to various stimuli. Catalyzes the demethylation of specific methylglutamate residues introduced into the chemoreceptors (methyl-accepting chemotaxis proteins or MCP) by CheR. Also mediates the irreversible deamidation of specific glutamine residues to glutamic acid. The polypeptide is Protein-glutamate methylesterase/protein-glutamine glutaminase 3 (Pseudomonas aeruginosa (strain ATCC 15692 / DSM 22644 / CIP 104116 / JCM 14847 / LMG 12228 / 1C / PRS 101 / PAO1)).